Here is a 26-residue protein sequence, read N- to C-terminus: MASRGALRRCLSPGLPRLLHLSRGLA.

As to quaternary structure, interacts with protein kinase C eta as well as other protein kinases including PRKCD, PRKCQ and PRKCE but not with PRKCG or PRKCZ; the interactions lead to inhibition of kinase activity.

Its function is as follows. Product of an upstream open reading frame (ORF) of PRKCH which regulates translation of the downstream protein kinase C eta (PKC-eta) ORF. Functions as a repressive element that maintains low basal levels of PKC-eta in growing cells but enhances its expression during stress conditions induced by amino acid starvation in a EIF2AK4/GCN2-dependent manner. In addition to its role in regulating PKC-eta translation, also inhibits the kinase activity of PKC-eta as well as other protein kinases including PRKCD, PRKCQ and PRKCE but not PRKCA, PRKCG or PRKCZ. This Homo sapiens (Human) protein is PRKCH upstream open reading frame 2.